A 277-amino-acid chain; its full sequence is Shikimate dehydrogenase (NADP(+)) (277 aa).

Shikimate is bound by residues 18-20 (SKS) and Thr65. The active-site Proton acceptor is Lys69. Position 81 (Glu81) interacts with NADP(+). Shikimate is bound by residues Asn90 and Asp106. Residues 130-134 (GAGGA), 154-159 (NRTFSK), and Met217 each bind NADP(+). Shikimate is bound at residue Tyr219. Gly241 contributes to the NADP(+) binding site.

This sequence belongs to the shikimate dehydrogenase family. In terms of assembly, homodimer.

The catalysed reaction is shikimate + NADP(+) = 3-dehydroshikimate + NADPH + H(+). Its pathway is metabolic intermediate biosynthesis; chorismate biosynthesis; chorismate from D-erythrose 4-phosphate and phosphoenolpyruvate: step 4/7. Functionally, involved in the biosynthesis of the chorismate, which leads to the biosynthesis of aromatic amino acids. Catalyzes the reversible NADPH linked reduction of 3-dehydroshikimate (DHSA) to yield shikimate (SA). The protein is Shikimate dehydrogenase (NADP(+)) of Vibrio parahaemolyticus serotype O3:K6 (strain RIMD 2210633).